Reading from the N-terminus, the 83-residue chain is NAD(P)H-quinone oxidoreductase subunit L (83 aa).

2 helical membrane passes run leucine 15 to alanine 35 and leucine 53 to isoleucine 73.

It belongs to the complex I NdhL subunit family. As to quaternary structure, NDH-1 can be composed of about 15 different subunits; different subcomplexes with different compositions have been identified which probably have different functions.

Its subcellular location is the cellular thylakoid membrane. The enzyme catalyses a plastoquinone + NADH + (n+1) H(+)(in) = a plastoquinol + NAD(+) + n H(+)(out). It catalyses the reaction a plastoquinone + NADPH + (n+1) H(+)(in) = a plastoquinol + NADP(+) + n H(+)(out). Functionally, NDH-1 shuttles electrons from an unknown electron donor, via FMN and iron-sulfur (Fe-S) centers, to quinones in the respiratory and/or the photosynthetic chain. The immediate electron acceptor for the enzyme in this species is believed to be plastoquinone. Couples the redox reaction to proton translocation, and thus conserves the redox energy in a proton gradient. Cyanobacterial NDH-1 also plays a role in inorganic carbon-concentration. The protein is NAD(P)H-quinone oxidoreductase subunit L of Synechococcus sp. (strain CC9902).